The chain runs to 318 residues: Glutathione synthetase (318 aa).

Residues 124-310 (EKLFTAWFPE…ITGKLMDAIE (187 aa)) enclose the ATP-grasp domain. 150 to 207 (FREQHGDVILKPLDGMGGASIFRVKEGDPNLSVIIETLTNHGQNYCMAQTFVPDISNG) contacts ATP. 2 residues coordinate Mg(2+): glutamate 281 and asparagine 283.

This sequence belongs to the prokaryotic GSH synthase family. Mg(2+) is required as a cofactor. The cofactor is Mn(2+).

The catalysed reaction is gamma-L-glutamyl-L-cysteine + glycine + ATP = glutathione + ADP + phosphate + H(+). It functions in the pathway sulfur metabolism; glutathione biosynthesis; glutathione from L-cysteine and L-glutamate: step 2/2. This chain is Glutathione synthetase, found in Vibrio cholerae serotype O1 (strain ATCC 39315 / El Tor Inaba N16961).